A 426-amino-acid chain; its full sequence is Dihydroorotase (426 aa).

2 residues coordinate Zn(2+): His55 and His57. Substrate is bound by residues 57 to 59 (HLR) and Asn89. The Zn(2+) site is built by Asp147, His174, His233, and Asp306. Residue Asp306 is part of the active site. Substrate contacts are provided by residues His310 and 324–325 (FG).

The protein belongs to the metallo-dependent hydrolases superfamily. DHOase family. Class I DHOase subfamily. Zn(2+) serves as cofactor.

The enzyme catalyses (S)-dihydroorotate + H2O = N-carbamoyl-L-aspartate + H(+). It participates in pyrimidine metabolism; UMP biosynthesis via de novo pathway; (S)-dihydroorotate from bicarbonate: step 3/3. Catalyzes the reversible cyclization of carbamoyl aspartate to dihydroorotate. This Thermus aquaticus protein is Dihydroorotase.